The following is a 377-amino-acid chain: Opsin, blue-sensitive (377 aa).

The Extracellular portion of the chain corresponds to 1–56 (MLLHNKTLAGKALAFIAEEGYVPSMREKFLGWNVPPEYSDLVHPHWRAFPAPGKHF). A glycan (N-linked (GlcNAc...) asparagine) is linked at Asn-5. Residues 57 to 81 (HIGLAIIYSMLLIMSLVGNCCVIWI) traverse the membrane as a helical segment. The Cytoplasmic portion of the chain corresponds to 82-93 (FSTSKSLRTPSN). Residues 94-119 (MFIVSLAIFDIIMAFEMPMLVISSFM) traverse the membrane as a helical segment. Over 120-132 (ERMIGWEIGCDVY) the chain is Extracellular. A disulfide bridge connects residues Cys-129 and Cys-206. A helical transmembrane segment spans residues 133–152 (SVFGSISGMGQAMTNAAIAF). The Cytoplasmic portion of the chain corresponds to 153-170 (DRYRTISCPIDGRLNSKQ). A helical transmembrane segment spans residues 171–195 (AAVIIAFTWFWVTPFTVLPLLKVWG). The Extracellular portion of the chain corresponds to 196–219 (RYTTEGFLTTCSFDFLTDDEDTKV). The helical transmembrane segment at 220–247 (FVTCIFIWAYVIPLIFIILFYSRLLSSI) threads the bilayer. The Cytoplasmic portion of the chain corresponds to 248-282 (RNHEKMLREQAKKMNVKSLVSNQDKERSAEVRIAK). A helical membrane pass occupies residues 283 to 306 (VAFTIFFLFLLAWTPYATVALIGV). Residues 307 to 314 (YGNRELLT) are Extracellular-facing. The helical transmembrane segment at 315 to 339 (PVSTMLPAVFAKTVSCIDPWIYAIN) threads the bilayer. At Lys-326 the chain carries N6-(retinylidene)lysine. The Cytoplasmic portion of the chain corresponds to 340-377 (HPRYRQELQKRCKWMGIHEPETTSDATSAQTEKIKTDE).

It belongs to the G-protein coupled receptor 1 family. Opsin subfamily. Post-translationally, phosphorylated on some or all of the serine and threonine residues present in the C-terminal region. In terms of tissue distribution, expressed in the dorsal region of the retina and sparsely expressed in the ventral region.

The protein resides in the membrane. Its function is as follows. Visual pigments are the light-absorbing molecules that mediate vision. They consist of an apoprotein, opsin, covalently linked to 11-cis-retinal. This Apis mellifera (Honeybee) protein is Opsin, blue-sensitive (BLOP).